We begin with the raw amino-acid sequence, 122 residues long: UPF0102 protein MUL_2060 (122 aa).

This sequence belongs to the UPF0102 family.

This Mycobacterium ulcerans (strain Agy99) protein is UPF0102 protein MUL_2060.